Consider the following 232-residue polypeptide: Protein TIFY 10c (232 aa).

The disordered stretch occupies residues 54–73 (PPAAGAGGAFRPPPTTMNLL). The region spanning 114 to 149 (AGEKAQQLTIFYGGKVVVFENFPSTKVKDLLQIVST) is the Tify domain. A disordered region spans residues 152 to 177 (GVDKNTGTAATQSLPRPAHNSLPDLP). Residues 156–165 (NTGTAATQSL) are compositionally biased toward polar residues. A Jas motif is present at residues 177 to 202 (PIARRNSLHRFLEKRKGRMNANAPYQ). The Nuclear localization signal signature appears at 179–186 (ARRNSLHR).

The protein belongs to the TIFY/JAZ family. Interacts with BHLH148. Interacts with COI1B in a coronatine-dependent manner. Coronatine is an analog of jasmonoyl isoleucine (JA-Ile). Interacts with TIFY5/JAZ2, TIFY6B/JAZ4, TIFY9/JAZ5, TIFY11A, TIFY11D/JAZ12, TIFY11G/JAZ15 and NINJA1. In terms of processing, ubiquitinated. Increase in jasmonoyl isoleucine (JA-Ile) levels mediates its degradation via COI1B-mediated proteasome pathway.

Its subcellular location is the nucleus. It is found in the cytoplasm. The protein localises to the cytosol. Functionally, repressor of jasmonate (JA) responses. Acts as a repressor of JA-induced resistance to the bacterial blight pathogen Xanthomonas oryzae pv. oryzae (Xoo). Regulates JA-induced accumulation of linalool at the transcriptional level of linalool synthase gene LIS. Linalool is important for resistance to bacterial blight pathogen Xoo. This is Protein TIFY 10c from Oryza sativa subsp. japonica (Rice).